Here is a 732-residue protein sequence, read N- to C-terminus: Catalase-peroxidase (732 aa).

The segment at 1-21 (MSMAEMRCPFSGHGAATTPAS) is disordered. The N-terminal stretch at 1-22 (MSMAEMRCPFSGHGAATTPASA) is a signal peptide. The tryptophyl-tyrosyl-methioninium (Trp-Tyr) (with M-246) cross-link spans 97–220 (WHSAGTYRLA…LAATEMGLIY (124 aa)). The Proton acceptor role is filled by H98. Positions 220 to 246 (YVNPEGPHGEPDPVASGREVRDTFARM) form a cross-link, tryptophyl-tyrosyl-methioninium (Tyr-Met) (with W-97). H261 contributes to the heme b binding site.

It belongs to the peroxidase family. Peroxidase/catalase subfamily. Homodimer or homotetramer. Heme b is required as a cofactor. Formation of the three residue Trp-Tyr-Met cross-link is important for the catalase, but not the peroxidase activity of the enzyme.

The catalysed reaction is H2O2 + AH2 = A + 2 H2O. The enzyme catalyses 2 H2O2 = O2 + 2 H2O. In terms of biological role, bifunctional enzyme with both catalase and broad-spectrum peroxidase activity. The polypeptide is Catalase-peroxidase (Synechococcus sp. (strain RCC307)).